A 759-amino-acid polypeptide reads, in one-letter code: LPS-assembly protein LptD (759 aa).

An N-terminal signal peptide occupies residues 1-22 (MPLPIPRLLIPALLLASGASLA).

Belongs to the LptD family. In terms of assembly, component of the lipopolysaccharide transport and assembly complex. Interacts with LptE and LptA.

Its subcellular location is the cell outer membrane. Together with LptE, is involved in the assembly of lipopolysaccharide (LPS) at the surface of the outer membrane. The protein is LPS-assembly protein LptD of Alcanivorax borkumensis (strain ATCC 700651 / DSM 11573 / NCIMB 13689 / SK2).